Consider the following 130-residue polypeptide: Large ribosomal subunit protein bL17 (130 aa).

Belongs to the bacterial ribosomal protein bL17 family. In terms of assembly, part of the 50S ribosomal subunit. Contacts protein L32.

This is Large ribosomal subunit protein bL17 from Paraburkholderia xenovorans (strain LB400).